Reading from the N-terminus, the 252-residue chain is MQLTRCCFVFLVQGSLYLVICGQEDGPPGSEDPEHDDHEGQPRPRVPRKRGHISPKSRPLANSTLLGLLAPPGEVWGILGQPPNRPKQSPLPSTKVKKIFGWGDFYSNIKTVALNLLVTGKIVDHGNGTFSVHFRHNATGQGNISISLVPPSKAVEFHQEQQIFIEAKASKIFNCRMEWEKVERGRRTSLCTHDPAKICSRDHAQSSATWSCSQPFKIVCVYIAFYSTDYRLVQKVCPDYNYHSDTPYYPSG.

A signal peptide spans 1 to 22 (MQLTRCCFVFLVQGSLYLVICG). The segment at 23-75 (QEDGPPGSEDPEHDDHEGQPRPRVPRKRGHISPKSRPLANSTLLGLLAPPGEV) is II. The interval 27-59 (PPGSEDPEHDDHEGQPRPRVPRKRGHISPKSRP) is disordered. Basic residues predominate over residues 45–55 (RVPRKRGHISP). Asparagine 62, asparagine 127, asparagine 137, and asparagine 143 each carry an N-linked (GlcNAc...) asparagine glycan. The tract at residues 76–157 (WGILGQPPNR…LVPPSKAVEF (82 aa)) is III. The IV (linker domain) stretch occupies residues 158–166 (HQEQQIFIE). Positions 167 to 252 (AKASKIFNCR…HSDTPYYPSG (86 aa)) are v (Cys-rich).

The protein belongs to the neurexophilin family. May be proteolytically processed at the boundary between the N-terminal non-conserved and the central conserved domain in neuron-like cells. As to expression, brain. Detected in several other tissues.

It localises to the secreted. May be signaling molecules that resemble neuropeptides. Ligand for alpha-neurexins. This Rattus norvegicus (Rat) protein is Neurexophilin-3 (Nxph3).